We begin with the raw amino-acid sequence, 169 residues long: ALK and LTK ligand 2a (169 aa).

Positions 1–25 are cleaved as a signal peptide; it reads MRALRAPVLVMGLVLLICTAAQSDA. The disordered stretch occupies residues 45–68; sequence ENSADDESAQKTESAPEPKDTHHL. Residues 52–67 show a composition bias toward basic and acidic residues; it reads SAQKTESAPEPKDTHH. 2 cysteine pairs are disulfide-bonded: C130-C166 and C144-C153.

Belongs to the ALKAL family. In terms of assembly, homodimer. As to expression, expressed at high level in the notochord and iridophore stripes of the trunk, as well as in the eye and swim bladder.

The protein resides in the secreted. The protein localises to the cell membrane. Its function is as follows. Cytokine that acts as a physiological ligand for receptor tyrosine kinases LTK and ALK. Required for neural crest cell differentiation and iridophore development during embryonic iridophore development and adult stripe development by acting as a receptor for LTK. This chain is ALK and LTK ligand 2a, found in Danio rerio (Zebrafish).